Reading from the N-terminus, the 356-residue chain is Histidinol-phosphate aminotransferase (356 aa).

Residue K214 is modified to N6-(pyridoxal phosphate)lysine.

This sequence belongs to the class-II pyridoxal-phosphate-dependent aminotransferase family. Histidinol-phosphate aminotransferase subfamily. In terms of assembly, homodimer. It depends on pyridoxal 5'-phosphate as a cofactor.

The enzyme catalyses L-histidinol phosphate + 2-oxoglutarate = 3-(imidazol-4-yl)-2-oxopropyl phosphate + L-glutamate. It participates in amino-acid biosynthesis; L-histidine biosynthesis; L-histidine from 5-phospho-alpha-D-ribose 1-diphosphate: step 7/9. This Escherichia coli O81 (strain ED1a) protein is Histidinol-phosphate aminotransferase.